The chain runs to 847 residues: DNA mismatch repair protein MutS (847 aa).

602–609 (GPNMSGKS) contributes to the ATP binding site. Residues 788–807 (EKREASLPASRTDSQKVSEQ) form a disordered region. Residues 796–807 (ASRTDSQKVSEQ) show a composition bias toward polar residues.

It belongs to the DNA mismatch repair MutS family.

In terms of biological role, this protein is involved in the repair of mismatches in DNA. It is possible that it carries out the mismatch recognition step. This protein has a weak ATPase activity. The protein is DNA mismatch repair protein MutS of Streptococcus gordonii (strain Challis / ATCC 35105 / BCRC 15272 / CH1 / DL1 / V288).